The primary structure comprises 414 residues: Probable protein phosphatase 2C 80 (414 aa).

A PPM-type phosphatase domain is found at 174-411; it reads SCYLPHPEKE…DDITAVVSYV (238 aa). 4 residues coordinate Mn(2+): aspartate 204, glycine 205, aspartate 336, and aspartate 402.

It belongs to the PP2C family. Mg(2+) serves as cofactor. Mn(2+) is required as a cofactor.

The enzyme catalyses O-phospho-L-seryl-[protein] + H2O = L-seryl-[protein] + phosphate. The catalysed reaction is O-phospho-L-threonyl-[protein] + H2O = L-threonyl-[protein] + phosphate. The polypeptide is Probable protein phosphatase 2C 80 (Arabidopsis thaliana (Mouse-ear cress)).